A 210-amino-acid chain; its full sequence is Tissue inhibitor of metalloproteinase (210 aa).

Residues 1–27 form the signal peptide; the sequence is MDLRKHLGLLTLLLVAVFAFYGRPADA. Cysteine 28 serves as a coordination point for Zn(2+). Involved in metalloproteinase-binding regions lie at residues 28-31 and 93-94; these read CSCM and DA. Disulfide bonds link cysteine 28–cysteine 96, cysteine 30–cysteine 118, cysteine 145–cysteine 195, cysteine 150–cysteine 155, and cysteine 165–cysteine 180. Residues 28–145 form the NTR domain; the sequence is CSCMPSHPQT…SGGYAKATNC (118 aa).

This sequence belongs to the protease inhibitor I35 (TIMP) family. As to expression, expressed in heads of female and male adult flies. Expressed at the time of eclosion in unopened wings of adult flies. Strongly expressed at the tip of ovarian germarium region 1 where germline stem cells (GSCs) and cystoblasts reside and in region 2 of the germarium.

It localises to the secreted. Functionally, metalloproteinase inhibitor that acts on both matrix metalloproteinases Mmp1 and Mmp2 in vitro. Complexes with metalloproteinases and irreversibly inactivates them by binding to their catalytic zinc cofactor. Required for wing maturation which is the final step in morphogenesis of the adult fly. Involved in the negative regulation of developmental tissue invasion for imaginal disk eversion during metamorphosis by inhibiting Mmp-mediated basement membrane (BM) degradation. Required for oogenesis and for the long-term maintainance of germarial structure and shape in the adult ovaries. Required for maintaining composition and biophysical properties of the extracellular matrix (ECM), and for the normal organization and cyst production of the germline stem cell (GSC) niche. This chain is Tissue inhibitor of metalloproteinase, found in Drosophila melanogaster (Fruit fly).